The primary structure comprises 218 residues: Monomethylamine corrinoid protein 1 (218 aa).

The B12-binding N-terminal domain maps to 1–91 (MANQEIFDKL…ELEKTKVEGE (91 aa)). A B12-binding domain is found at 94 to 218 (TGLAITFVAE…AAKVALNIMK (125 aa)). His-107 contacts methylcob(III)alamin.

This sequence belongs to the methylamine corrinoid protein family. As to quaternary structure, can form a complex with MtmB.

It participates in one-carbon metabolism; methanogenesis from methylamine. Its function is as follows. Acts as a methyl group carrier between MtmB and MtbA. In Methanosarcina acetivorans (strain ATCC 35395 / DSM 2834 / JCM 12185 / C2A), this protein is Monomethylamine corrinoid protein 1 (mtmC1).